The sequence spans 309 residues: Protein FdhE homolog (309 aa).

A disordered region spans residues 1–22 (MSIRIVPQEQLEQNGKSTPEGH).

This sequence belongs to the FdhE family.

Its subcellular location is the cytoplasm. Functionally, necessary for formate dehydrogenase activity. This is Protein FdhE homolog from Pectobacterium carotovorum subsp. carotovorum (strain PC1).